Consider the following 311-residue polypeptide: MKVAVIGAAGGIGQALALLLKNRLPAGSDLALYDIAPVTPGVAADLSHIPTPVSIKGYAGEDPTPALEGADVVLISAGVARKPGMDRADLFNVNAGIVKSLAEKIAVVCPTACVGIITNPVNTTVPIAAEVLKKAGVYDKRKLFGVTTLDVIRSETFVAELKDKDPGDVRVPVIGGHSGVTILPLLSQVEGVEFTAEEVEALTKRIQNAGTEVVEAKAGGGSATLSMGQAACRFGLALVRALQGEEGVVECAYVEGDSEHASYFAQPVKLGKDGVEEVLSYGALSDYEKSALDGMLETLNGDINIGVEFAK.

Residues 7-13 and Asp34 each bind NAD(+); that span reads GAAGGIG. Substrate contacts are provided by Arg81 and Arg87. NAD(+) is bound by residues Asn94 and 117 to 119; that span reads ITN. Asn119 and Arg153 together coordinate substrate. Catalysis depends on His177, which acts as the Proton acceptor. Met227 contributes to the NAD(+) binding site.

Belongs to the LDH/MDH superfamily. MDH type 1 family. In terms of assembly, homodimer.

The catalysed reaction is (S)-malate + NAD(+) = oxaloacetate + NADH + H(+). Catalyzes the reversible oxidation of malate to oxaloacetate. This Vibrio campbellii (strain ATCC BAA-1116) protein is Malate dehydrogenase.